The sequence spans 315 residues: MKIGYFGTPEHSAKLLEALIDSQLTEVLFVVTNPDRPKGRSKIPEPGPVKKKALEYNIPVFQYESIKKEKEKALSDFGLFSADLYVVFAYGSILPKEVYAHSTLTSINLHGSLLPDLRGASPVQTALWKGYTKTGITIQYIGEKMDEGDILLTKEVEIAPEDNTGTLMDKITDAGIESILQLLKTYDGKPFPSVPQAHDKATYCGKIKSEDRILDWSLKSEELHNRIRALYPDMIATTTFRDKRMNILKTKPSSLSLEINPTPGKLKRLDKKRLLTQCGDGRFLEILELQPENKNRMTASDFLNGFRIQEGETFG.

(6S)-5,6,7,8-tetrahydrofolate is bound at residue 112–115; the sequence is SLLP.

Belongs to the Fmt family.

The enzyme catalyses L-methionyl-tRNA(fMet) + (6R)-10-formyltetrahydrofolate = N-formyl-L-methionyl-tRNA(fMet) + (6S)-5,6,7,8-tetrahydrofolate + H(+). In terms of biological role, attaches a formyl group to the free amino group of methionyl-tRNA(fMet). The formyl group appears to play a dual role in the initiator identity of N-formylmethionyl-tRNA by promoting its recognition by IF2 and preventing the misappropriation of this tRNA by the elongation apparatus. In Leptospira interrogans serogroup Icterohaemorrhagiae serovar copenhageni (strain Fiocruz L1-130), this protein is Methionyl-tRNA formyltransferase.